Reading from the N-terminus, the 202-residue chain is Small ribosomal subunit protein uS4c (202 aa).

One can recognise an S4 RNA-binding domain in the interval 90 to 153 (MRLDNIIFRL…KSQAIISKNI (64 aa)).

Belongs to the universal ribosomal protein uS4 family. Part of the 30S ribosomal subunit. Contacts protein S5. The interaction surface between S4 and S5 is involved in control of translational fidelity.

Its subcellular location is the plastid. The protein localises to the chloroplast. One of the primary rRNA binding proteins, it binds directly to 16S rRNA where it nucleates assembly of the body of the 30S subunit. In terms of biological role, with S5 and S12 plays an important role in translational accuracy. The polypeptide is Small ribosomal subunit protein uS4c (rps4) (Splachnum sphaericum (Pinkstink dung moss)).